We begin with the raw amino-acid sequence, 393 residues long: MTKARKALENYRRVVIKIGSALLVDRRTGLKKSWLDALCADIAALRAKGVEVLVVSSGAIALGRTVLDLPAGALKLEESQAAAAVGQIVLARAWSESLSTHAIVAGQILLTLGDTEERRRYLNARATIGQLLKLGSVPIINENDTVATTEIRYGDNDRLAARVATMVGADLLVLLSDIDGLYTAPPHLDPNARFLETVAEITPEIEAMAGGAASELSRGGMRTKIDAGKIATTAGCAMIIASGKPDHPLAAIEAGARSSWFAPSGSPVTARKTWIAGQLLPAGSLSIDAGAETALRSGKSLLPAGVRQVTGSFSRGDTIAIIGASGREIARGLAGYDADEARQIAGKKSAEIAAILGYAGRTAMVHRDDLVMTAPSGARLVEESDEGKGKLHA.

Lysine 17 lines the ATP pocket. Serine 57, aspartate 144, and asparagine 156 together coordinate substrate. 176–177 (SD) is an ATP binding site. A PUA domain is found at 282-359 (AGSLSIDAGA…AEIAAILGYA (78 aa)).

It belongs to the glutamate 5-kinase family.

It is found in the cytoplasm. The catalysed reaction is L-glutamate + ATP = L-glutamyl 5-phosphate + ADP. It participates in amino-acid biosynthesis; L-proline biosynthesis; L-glutamate 5-semialdehyde from L-glutamate: step 1/2. Catalyzes the transfer of a phosphate group to glutamate to form L-glutamate 5-phosphate. This is Glutamate 5-kinase 1 from Rhizobium meliloti (strain 1021) (Ensifer meliloti).